We begin with the raw amino-acid sequence, 547 residues long: Membrane protein insertase YidC (547 aa).

The helical transmembrane segment at 8-28 (LRLILAIALSFLFIALYSYFF) threads the bilayer. Low complexity predominate over residues 37–50 (QTTKQETTNNHTAT). The tract at residues 37–62 (QTTKQETTNNHTATSPNAPNAQHFST) is disordered. Polar residues predominate over residues 51–62 (SPNAPNAQHFST). 5 consecutive transmembrane segments (helical) span residues 325 to 345 (VIEYGLITFFAKGVFVLLDYL), 348 to 368 (FVGNWGWAIILLTIIVRIILY), 414 to 434 (GANPLGGCLPLILQIPVFFAI), 449 to 469 (WILWIHDLSIMDPYFILPLLM), and 495 to 515 (LLPLLFTIFLITFPAGLVLYW).

The protein belongs to the OXA1/ALB3/YidC family. Type 1 subfamily. In terms of assembly, interacts with the Sec translocase complex via SecD. Specifically interacts with transmembrane segments of nascent integral membrane proteins during membrane integration.

The protein localises to the cell inner membrane. Functionally, required for the insertion and/or proper folding and/or complex formation of integral membrane proteins into the membrane. Involved in integration of membrane proteins that insert both dependently and independently of the Sec translocase complex, as well as at least some lipoproteins. Aids folding of multispanning membrane proteins. The sequence is that of Membrane protein insertase YidC from Helicobacter pylori (strain ATCC 700392 / 26695) (Campylobacter pylori).